The chain runs to 52 residues: Metchnikowin (52 aa).

The first 24 residues, 1–24 (MQLNLGAIFLALLGVMATATSVLA), serve as a signal peptide directing secretion. Residues 25-26 (EP) constitute a propeptide that is removed on maturation. The interval 28–52 (RHQGPIFDTRPSPFNPNQPRPGPIY) is disordered. A compositionally biased stretch (pro residues) spans 40–52 (PFNPNQPRPGPIY).

In terms of tissue distribution, hemolymph (at protein level). Highest expression in fat body.

The protein resides in the secreted. Functionally, potent antifungal and antibacterial activity against Gram-positive bacteria. The polypeptide is Metchnikowin (Mtk) (Drosophila melanogaster (Fruit fly)).